The primary structure comprises 578 residues: Arginine--tRNA ligase (578 aa).

The short motif at Pro-123 to His-133 is the 'HIGH' region element.

It belongs to the class-I aminoacyl-tRNA synthetase family. As to quaternary structure, monomer.

The protein localises to the cytoplasm. The catalysed reaction is tRNA(Arg) + L-arginine + ATP = L-arginyl-tRNA(Arg) + AMP + diphosphate. The polypeptide is Arginine--tRNA ligase (Baumannia cicadellinicola subsp. Homalodisca coagulata).